A 151-amino-acid polypeptide reads, in one-letter code: Ribosome maturation factor RimP (151 aa).

It belongs to the RimP family.

Its subcellular location is the cytoplasm. Functionally, required for maturation of 30S ribosomal subunits. The protein is Ribosome maturation factor RimP of Shewanella oneidensis (strain ATCC 700550 / JCM 31522 / CIP 106686 / LMG 19005 / NCIMB 14063 / MR-1).